Here is a 409-residue protein sequence, read N- to C-terminus: Histidine--tRNA ligase (409 aa).

This sequence belongs to the class-II aminoacyl-tRNA synthetase family.

It localises to the cytoplasm. The catalysed reaction is tRNA(His) + L-histidine + ATP = L-histidyl-tRNA(His) + AMP + diphosphate + H(+). This chain is Histidine--tRNA ligase (hisS), found in Archaeoglobus fulgidus (strain ATCC 49558 / DSM 4304 / JCM 9628 / NBRC 100126 / VC-16).